A 612-amino-acid chain; its full sequence is UvrABC system protein C (612 aa).

The 79-residue stretch at 20–98 (THSGVYRMLD…IKQHRPKYNI (79 aa)) folds into the GIY-YIG domain. The 36-residue stretch at 208 to 243 (SSVLEEISAKMYQASEDMEYEKAQVYRDQLVVLRKL) folds into the UVR domain.

Belongs to the UvrC family. As to quaternary structure, interacts with UvrB in an incision complex.

It localises to the cytoplasm. The UvrABC repair system catalyzes the recognition and processing of DNA lesions. UvrC both incises the 5' and 3' sides of the lesion. The N-terminal half is responsible for the 3' incision and the C-terminal half is responsible for the 5' incision. The sequence is that of UvrABC system protein C from Francisella tularensis subsp. holarctica (strain FTNF002-00 / FTA).